Here is a 377-residue protein sequence, read N- to C-terminus: Opsin, blue-sensitive (377 aa).

Residues 1 to 56 (MLLHNKTLAGKALAFIAEEGYVPSMREKFLGWNVPPEYSDLVHPHWRAFPAPGKHF) are Extracellular-facing. An N-linked (GlcNAc...) asparagine glycan is attached at N5. The helical transmembrane segment at 57-81 (HIGLAIIYSMLLIMSLVGNCCVIWI) threads the bilayer. Residues 82 to 93 (FSTSKSLRTPSN) are Cytoplasmic-facing. The chain crosses the membrane as a helical span at residues 94–119 (MFIVSLAIFDIIMAFEMPMLVISSFM). Topologically, residues 120 to 132 (ERMIGWEIGCDVY) are extracellular. C129 and C206 are joined by a disulfide. Residues 133-152 (SVFGSISGMGQAMTNAAIAF) form a helical membrane-spanning segment. The Cytoplasmic segment spans residues 153–170 (DRYRTISCPIDGRLNSKQ). A helical transmembrane segment spans residues 171–195 (AAVIIAFTWFWVTPFTVLPLLKVWG). The Extracellular portion of the chain corresponds to 196–219 (RYTTEGFLTTCSFDFLTDDEDTKV). Residues 220–247 (FVTCIFIWAYVIPLIFIILFYSRLLSSI) traverse the membrane as a helical segment. Over 248 to 282 (RNHEKMLREQAKKMNVKSLVSNQDKERSAEVRIAK) the chain is Cytoplasmic. A helical membrane pass occupies residues 283–306 (VAFTIFFLFLLAWTPYATVALIGV). The Extracellular portion of the chain corresponds to 307-314 (YGNRELLT). A helical membrane pass occupies residues 315-339 (PVSTMLPAVFAKTVSCIDPWIYAIN). Position 326 is an N6-(retinylidene)lysine (K326). Residues 340–377 (HPRYRQELQKRCKWMGIHEPETTSDATSAQTEKIKTDE) lie on the Cytoplasmic side of the membrane.

The protein belongs to the G-protein coupled receptor 1 family. Opsin subfamily. Phosphorylated on some or all of the serine and threonine residues present in the C-terminal region. As to expression, expressed in the dorsal region of the retina and sparsely expressed in the ventral region.

Its subcellular location is the membrane. Visual pigments are the light-absorbing molecules that mediate vision. They consist of an apoprotein, opsin, covalently linked to 11-cis-retinal. This Apis mellifera (Honeybee) protein is Opsin, blue-sensitive (BLOP).